Here is a 232-residue protein sequence, read N- to C-terminus: Phosphoribosylformylglycinamidine synthase subunit PurQ (232 aa).

The region spanning 3–232 (FAVIVFPGSN…SLVASALAVV (230 aa)) is the Glutamine amidotransferase type-1 domain. C86 serves as the catalytic Nucleophile. Active-site residues include H203 and E205.

In terms of assembly, part of the FGAM synthase complex composed of 1 PurL, 1 PurQ and 2 PurS subunits.

The protein localises to the cytoplasm. The enzyme catalyses N(2)-formyl-N(1)-(5-phospho-beta-D-ribosyl)glycinamide + L-glutamine + ATP + H2O = 2-formamido-N(1)-(5-O-phospho-beta-D-ribosyl)acetamidine + L-glutamate + ADP + phosphate + H(+). It carries out the reaction L-glutamine + H2O = L-glutamate + NH4(+). The protein operates within purine metabolism; IMP biosynthesis via de novo pathway; 5-amino-1-(5-phospho-D-ribosyl)imidazole from N(2)-formyl-N(1)-(5-phospho-D-ribosyl)glycinamide: step 1/2. Part of the phosphoribosylformylglycinamidine synthase complex involved in the purines biosynthetic pathway. Catalyzes the ATP-dependent conversion of formylglycinamide ribonucleotide (FGAR) and glutamine to yield formylglycinamidine ribonucleotide (FGAM) and glutamate. The FGAM synthase complex is composed of three subunits. PurQ produces an ammonia molecule by converting glutamine to glutamate. PurL transfers the ammonia molecule to FGAR to form FGAM in an ATP-dependent manner. PurS interacts with PurQ and PurL and is thought to assist in the transfer of the ammonia molecule from PurQ to PurL. This is Phosphoribosylformylglycinamidine synthase subunit PurQ from Gloeobacter violaceus (strain ATCC 29082 / PCC 7421).